Consider the following 91-residue polypeptide: Alpha-defensin-related sequence 2 (91 aa).

A signal peptide spans 1 to 19 (MKKLVLLFALVLLAFQVQA). The propeptide occupies 20–58 (DSIQNTDEETKTEEQPGEKDQAVSVSFGDPQGSALQDAA). A disordered region spans residues 22–48 (IQNTDEETKTEEQPGEKDQAVSVSFGD). The span at 27–40 (EETKTEEQPGEKDQ) shows a compositional bias: basic and acidic residues. 7 consecutive repeat copies span residues 65–67 (CPQ), 68–70 (CPR), 71–73 (CPS), 74–76 (CPS), 77–79 (CPR), 80–82 (CPR), and 83–85 (CPR). Positions 65 to 85 (CPQCPRCPSCPSCPRCPRCPR) are 7 X 3 AA tandem repeats of C-P-X.

It belongs to the alpha-defensin family. Small bowel, spleen, colon, kidney, liver, stomach and femur marrow.

Its subcellular location is the secreted. Its function is as follows. Apparent precursor of a secreted, cationic, proline- and cysteine-rich peptide that contains Cys-Pro-Xaa repeats. Unlike cryptdin, the proposed mature peptide region lacks the structural motif characteristic of defensins. It may have microbicidal activities. The chain is Alpha-defensin-related sequence 2 (Defa-rs2) from Mus musculus (Mouse).